The primary structure comprises 496 residues: Squalene epoxidase ERG1 (496 aa).

Residues 4–24 (VKYDAIIIGAGVIGPTIATAF) form a helical membrane-spanning segment. Residues 15–16 (VI), 35–36 (ER), Arg-43, Arg-148, Val-164, Asp-332, and Met-345 contribute to the FAD site. 2 helical membrane passes run 431 to 451 (IGLL…FFSV) and 466 to 486 (LGFP…IVIF).

Belongs to the squalene monooxygenase family. FAD serves as cofactor.

It is found in the microsome membrane. Its subcellular location is the endoplasmic reticulum membrane. It catalyses the reaction squalene + reduced [NADPH--hemoprotein reductase] + O2 = (S)-2,3-epoxysqualene + oxidized [NADPH--hemoprotein reductase] + H2O + H(+). It participates in terpene metabolism; lanosterol biosynthesis; lanosterol from farnesyl diphosphate: step 2/3. With respect to regulation, activity is completely abolished by Triton X-100, deoxycholate or Cu(2+), and partially inhibited by thiol reagents, rotenone and antimycin A. The allylamine antimycotic agents naftifine and SF 86-327are potent inhibitors and show apparently non-competitive kinetics with respect to the substrate squalene. Squalene epoxidase; part of the third module of ergosterol biosynthesis pathway that includes the late steps of the pathway. Erg1 catalyzes the epoxidation of squalene into 2,3-epoxysqualene. The third module or late pathway involves the ergosterol synthesis itself through consecutive reactions that mainly occur in the endoplasmic reticulum (ER) membrane. Firstly, the squalene synthase ERG9 catalyzes the condensation of 2 farnesyl pyrophosphate moieties to form squalene, which is the precursor of all steroids. Squalene synthase is crucial for balancing the incorporation of farnesyl diphosphate (FPP) into sterol and nonsterol isoprene synthesis. Secondly, the squalene epoxidase ERG1 catalyzes the stereospecific oxidation of squalene to (S)-2,3-epoxysqualene, which is considered to be a rate-limiting enzyme in steroid biosynthesis. Then, the lanosterol synthase ERG7 catalyzes the cyclization of (S)-2,3 oxidosqualene to lanosterol, a reaction that forms the sterol core. In the next steps, lanosterol is transformed to zymosterol through a complex process involving various demethylation, reduction and desaturation reactions. The lanosterol 14-alpha-demethylase ERG11 (also known as CYP51) catalyzes C14-demethylation of lanosterol to produce 4,4'-dimethyl cholesta-8,14,24-triene-3-beta-ol, which is critical for ergosterol biosynthesis. The C-14 reductase ERG24 reduces the C14=C15 double bond of 4,4-dimethyl-cholesta-8,14,24-trienol to produce 4,4-dimethyl-cholesta-8,24-dienol. 4,4-dimethyl-cholesta-8,24-dienol is substrate of the C-4 demethylation complex ERG25-ERG26-ERG27 in which ERG25 catalyzes the three-step monooxygenation required for the demethylation of 4,4-dimethyl and 4alpha-methylsterols, ERG26 catalyzes the oxidative decarboxylation that results in a reduction of the 3-beta-hydroxy group at the C-3 carbon to an oxo group, and ERG27 is responsible for the reduction of the keto group on the C-3. ERG28 has a role as a scaffold to help anchor ERG25, ERG26 and ERG27 to the endoplasmic reticulum and ERG29 regulates the activity of the iron-containing C4-methylsterol oxidase ERG25. Then, the sterol 24-C-methyltransferase ERG6 catalyzes the methyl transfer from S-adenosyl-methionine to the C-24 of zymosterol to form fecosterol. The C-8 sterol isomerase ERG2 catalyzes the reaction which results in unsaturation at C-7 in the B ring of sterols and thus converts fecosterol to episterol. The sterol-C5-desaturase ERG3 then catalyzes the introduction of a C-5 double bond in the B ring to produce 5-dehydroepisterol. The C-22 sterol desaturase ERG5 further converts 5-dehydroepisterol into ergosta-5,7,22,24(28)-tetraen-3beta-ol by forming the C-22(23) double bond in the sterol side chain. Finally, ergosta-5,7,22,24(28)-tetraen-3beta-ol is substrate of the C-24(28) sterol reductase ERG4 to produce ergosterol. This is Squalene epoxidase ERG1 from Candida albicans (strain SC5314 / ATCC MYA-2876) (Yeast).